Consider the following 178-residue polypeptide: Large ribosomal subunit protein uL10 (178 aa).

The protein belongs to the universal ribosomal protein uL10 family. As to quaternary structure, part of the ribosomal stalk of the 50S ribosomal subunit. The N-terminus interacts with L11 and the large rRNA to form the base of the stalk. The C-terminus forms an elongated spine to which L12 dimers bind in a sequential fashion forming a multimeric L10(L12)X complex.

Functionally, forms part of the ribosomal stalk, playing a central role in the interaction of the ribosome with GTP-bound translation factors. This Dictyoglomus thermophilum (strain ATCC 35947 / DSM 3960 / H-6-12) protein is Large ribosomal subunit protein uL10.